Consider the following 99-residue polypeptide: Nucleoid-associated protein EbfC (99 aa).

Belongs to the YbaB/EbfC family. As to quaternary structure, homodimer.

Its subcellular location is the cytoplasm. The protein resides in the nucleoid. In terms of biological role, binds to DNA and alters its conformation. May be involved in regulation of gene expression, nucleoid organization and DNA protection. The sequence is that of Nucleoid-associated protein EbfC from Borrelia turicatae (strain 91E135).